We begin with the raw amino-acid sequence, 727 residues long: Protein EXECUTER 1, chloroplastic (727 aa).

4 disordered regions span residues 1-51 (MAAA…SRLF), 65-102 (LAGA…AGSG), 340-381 (ISSS…LPSD), and 413-455 (DEDD…SGDE). The transit peptide at 1–83 (MAAAVSTAPR…PRRRVSSVVR (83 aa)) directs the protein to the chloroplast. 2 stretches are compositionally biased toward low complexity: residues 19 to 33 (SSSC…ASMS) and 42 to 51 (PSSGSGSRLF). Residues 413–441 (DEDDENDNPEDEIESSEDIGDGDNVEEAE) are compositionally biased toward acidic residues.

The protein resides in the plastid. The protein localises to the chloroplast. Together with EX2, enables higher plants to perceive singlet oxygen as a stress signal in plastid that activates a genetically determined nuclear stress response program which triggers a programmed cell death (PCD). This transfer of singlet oxygen-induced stress-related signals from the plastid to the nucleus that triggers genetically controlled PCD pathway is unique to photosynthetic eukaryotes and operates under mild stress conditions, impeding photosystem II (PSII) without causing photooxidative damage of the plant. The protein is Protein EXECUTER 1, chloroplastic of Oryza sativa subsp. japonica (Rice).